A 96-amino-acid chain; its full sequence is Integration host factor subunit beta (96 aa).

Belongs to the bacterial histone-like protein family. Heterodimer of an alpha and a beta chain.

In terms of biological role, this protein is one of the two subunits of integration host factor, a specific DNA-binding protein that functions in genetic recombination as well as in transcriptional and translational control. This chain is Integration host factor subunit beta, found in Dichelobacter nodosus (strain VCS1703A).